The chain runs to 529 residues: Putative cysteine ligase BshC (529 aa).

The stretch at 450–485 forms a coiled coil; it reads VKQTKGLENLEKRLLKAQKRNLSDQLQRVIDLQCEL.

Belongs to the BshC family.

This chain is Putative cysteine ligase BshC, found in Flavobacterium johnsoniae (strain ATCC 17061 / DSM 2064 / JCM 8514 / BCRC 14874 / CCUG 350202 / NBRC 14942 / NCIMB 11054 / UW101) (Cytophaga johnsonae).